We begin with the raw amino-acid sequence, 40 residues long: MITDVQLAIFSNVLGVFLFLLVVAYHYINANTGKSSPKAK.

At 1–4 (MITD) the chain is on the lumenal side. Residues 5–25 (VQLAIFSNVLGVFLFLLVVAY) form a helical membrane-spanning segment. Residues 26 to 40 (HYINANTGKSSPKAK) are Cytoplasmic-facing.

Belongs to the OST4 family. As to quaternary structure, component of the oligosaccharyltransferase (OST) complex.

Its subcellular location is the endoplasmic reticulum membrane. In terms of biological role, subunit of the oligosaccharyl transferase (OST) complex that catalyzes the initial transfer of a defined glycan (Glc(3)Man(9)GlcNAc(2) in eukaryotes) from the lipid carrier dolichol-pyrophosphate to an asparagine residue within an Asn-X-Ser/Thr consensus motif in nascent polypeptide chains, the first step in protein N-glycosylation. N-glycosylation occurs cotranslationally and the complex associates with the Sec61 complex at the channel-forming translocon complex that mediates protein translocation across the endoplasmic reticulum (ER). All subunits are required for a maximal enzyme activity. The protein is Dolichyl-diphosphooligosaccharide--protein glycosyltransferase subunit 4 of Drosophila persimilis (Fruit fly).